The primary structure comprises 309 residues: Coenzyme PQQ synthesis protein B (309 aa).

It belongs to the PqqB family.

The protein operates within cofactor biosynthesis; pyrroloquinoline quinone biosynthesis. May be involved in the transport of PQQ or its precursor to the periplasm. The protein is Coenzyme PQQ synthesis protein B of Bradyrhizobium diazoefficiens (strain JCM 10833 / BCRC 13528 / IAM 13628 / NBRC 14792 / USDA 110).